A 147-amino-acid chain; its full sequence is uncharacterized protein (147 aa).

The segment covering 72-81 (ARAKPASRAP) has biased composition (low complexity). A disordered region spans residues 72–147 (ARAKPASRAP…QGAAGRRLSP (76 aa)).

This is an uncharacterized protein from Homo sapiens (Human).